The primary structure comprises 633 residues: ATP-dependent clpX-like chaperone, mitochondrial (633 aa).

A mitochondrion-targeting transit peptide spans 1 to 56 (MPSCGACTCGAAAVRLITSSLASAQRGISGGRIHMSVLGRLGTFETQILQRAPLRS). A disordered region spans residues 68–100 (DGISKDGSGDGNKKSASEGSSKKSGSGNSGKGG). Positions 69-83 (GISKDGSGDGNKKSA) are enriched in basic and acidic residues. Over residues 84-93 (SEGSSKKSGS) the composition is skewed to low complexity. In terms of domain architecture, ClpX-type ZB spans 93–146 (SGNSGKGGNQLRCPKCGDLCTHVETFVSSTRFVKCEKCHHFFVVLSEADSKKSI). Cysteine 105, cysteine 108, cysteine 127, and cysteine 130 together coordinate Zn(2+). 294–301 (PTGSGKTL) is an ATP binding site. Lysine 437 bears the N6-acetyllysine mark. The span at 598 to 610 (KEPGYIRAPTKES) shows a compositional bias: basic and acidic residues. The segment at 598–633 (KEPGYIRAPTKESSEEEYDSGVEEEGWPRQADAANS) is disordered. The segment covering 611-622 (SEEEYDSGVEEE) has biased composition (acidic residues). Residue serine 617 is modified to Phosphoserine.

This sequence belongs to the ClpX chaperone family. In terms of assembly, homohexamer that forms a ring structure; this hexamerization requires ATP binding. Component of the ClpXP complex formed by the assembly of two CLPP heptameric rings with two CLPX hexameric rings, giving rise to a symmetrical structure with two central CLPP rings flanked by a CLPX ring at either end of the complex. Interacts with TFAM. In terms of tissue distribution, higher expression in skeletal muscle and heart and to a lesser extent in liver, brain, placenta, lung, kidney and pancreas.

Its subcellular location is the mitochondrion. The protein localises to the mitochondrion matrix. The protein resides in the mitochondrion nucleoid. The enzyme catalyses ATP + H2O = ADP + phosphate + H(+). Its function is as follows. ATP-dependent chaperone that functions as an unfoldase. As part of the ClpXP protease complex, it recognizes specific protein substrates, unfolds them using energy derived from ATP hydrolysis, and then translocates them to the proteolytic subunit (CLPP) of the ClpXP complex for degradation. Thanks to its chaperone activity, it also functions in the incorporation of the pyridoxal phosphate cofactor into 5-aminolevulinate synthase, thereby activating 5-aminolevulinate (ALA) synthesis, the first step in heme biosynthesis. This chaperone is also involved in the control of mtDNA nucleoid distribution, by regulating mitochondrial transcription factor A (TFAM) activity. This Homo sapiens (Human) protein is ATP-dependent clpX-like chaperone, mitochondrial.